A 298-amino-acid chain; its full sequence is Lipoyl synthase (298 aa).

Cys-40, Cys-45, Cys-51, Cys-67, Cys-71, Cys-74, and Ser-280 together coordinate [4Fe-4S] cluster. Residues 53-269 (AVRRTATFMI…KEIALSKGFS (217 aa)) enclose the Radical SAM core domain.

This sequence belongs to the radical SAM superfamily. Lipoyl synthase family. The cofactor is [4Fe-4S] cluster.

It is found in the cytoplasm. It catalyses the reaction [[Fe-S] cluster scaffold protein carrying a second [4Fe-4S](2+) cluster] + N(6)-octanoyl-L-lysyl-[protein] + 2 oxidized [2Fe-2S]-[ferredoxin] + 2 S-adenosyl-L-methionine + 4 H(+) = [[Fe-S] cluster scaffold protein] + N(6)-[(R)-dihydrolipoyl]-L-lysyl-[protein] + 4 Fe(3+) + 2 hydrogen sulfide + 2 5'-deoxyadenosine + 2 L-methionine + 2 reduced [2Fe-2S]-[ferredoxin]. It participates in protein modification; protein lipoylation via endogenous pathway; protein N(6)-(lipoyl)lysine from octanoyl-[acyl-carrier-protein]. Its function is as follows. Catalyzes the radical-mediated insertion of two sulfur atoms into the C-6 and C-8 positions of the octanoyl moiety bound to the lipoyl domains of lipoate-dependent enzymes, thereby converting the octanoylated domains into lipoylated derivatives. The protein is Lipoyl synthase of Geobacillus kaustophilus (strain HTA426).